We begin with the raw amino-acid sequence, 307 residues long: Heme A synthase (307 aa).

The Cytoplasmic segment spans residues Met-1–Arg-6. Residues Leu-7 to Thr-27 form a helical membrane-spanning segment. Residues Lys-28–Gly-65 lie on the Extracellular side of the membrane. Cys-35 and Cys-42 are disulfide-bonded. Glu-57 is a catalytic residue. His-60 lines the heme o pocket. A helical membrane pass occupies residues Val-66 to Phe-86. Topologically, residues Arg-87–Leu-92 are cytoplasmic. Residues Val-93–Phe-113 traverse the membrane as a helical segment. At Gly-114–Ala-121 the chain is on the extracellular side. A helical membrane pass occupies residues Leu-122–Phe-142. Position 123 (His-123) interacts with heme o. The Cytoplasmic segment spans residues Glu-143 to Met-161. Residues Gln-162–Val-182 traverse the membrane as a helical segment. Residues Arg-183–Arg-216 lie on the Extracellular side of the membrane. Cys-191 and Cys-197 are oxidised to a cystine. Residue His-215 coordinates heme b. Residues Ala-217–Tyr-237 traverse the membrane as a helical segment. Residues Lys-238–Gln-242 lie on the Cytoplasmic side of the membrane. Residues Leu-243–Met-263 form a helical membrane-spanning segment. Over Ser-264 to Ala-274 the chain is Extracellular. A helical transmembrane segment spans residues Leu-275–Ile-295. His-277 is a binding site for heme b. Residues Ala-296–Lys-307 lie on the Cytoplasmic side of the membrane.

Belongs to the COX15/CtaA family. Type 1 subfamily. As to quaternary structure, interacts with CtaB. Requires heme b as cofactor.

The protein resides in the cell membrane. The enzyme catalyses Fe(II)-heme o + 2 A + H2O = Fe(II)-heme a + 2 AH2. It functions in the pathway porphyrin-containing compound metabolism; heme A biosynthesis; heme A from heme O: step 1/1. In terms of biological role, catalyzes the conversion of heme O to heme A by two successive hydroxylations of the methyl group at C8. The first hydroxylation forms heme I, the second hydroxylation results in an unstable dihydroxymethyl group, which spontaneously dehydrates, resulting in the formyl group of heme A. The protein is Heme A synthase of Bacillus pumilus (strain SAFR-032).